Here is a 60-residue protein sequence, read N- to C-terminus: Cytotoxin 5 (60 aa).

4 disulfides stabilise this stretch: Cys-3-Cys-21, Cys-14-Cys-38, Cys-42-Cys-53, and Cys-54-Cys-59.

It belongs to the three-finger toxin family. Short-chain subfamily. Type IA cytotoxin sub-subfamily. Monomer in solution; Homodimer and oligomer in the presence of negatively charged lipids forming a pore with a size ranging between 20 and 30 Angstroms. Expressed by the venom gland.

It is found in the secreted. The protein localises to the target cell membrane. Shows cytolytic activity on many different cells by forming pore in lipid membranes. In vivo, increases heart rate or kills the animal by cardiac arrest. In addition, it binds to heparin with high affinity, interacts with Kv channel-interacting protein 1 (KCNIP1) in a calcium-independent manner, and binds to integrin alpha-V/beta-3 (ITGAV/ITGB3) with moderate affinity. In Naja kaouthia (Monocled cobra), this protein is Cytotoxin 5.